A 118-amino-acid chain; its full sequence is Putative pterin-4-alpha-carbinolamine dehydratase (118 aa).

The protein belongs to the pterin-4-alpha-carbinolamine dehydratase family.

The enzyme catalyses (4aS,6R)-4a-hydroxy-L-erythro-5,6,7,8-tetrahydrobiopterin = (6R)-L-erythro-6,7-dihydrobiopterin + H2O. This chain is Putative pterin-4-alpha-carbinolamine dehydratase, found in Xanthomonas oryzae pv. oryzae (strain PXO99A).